An 813-amino-acid polypeptide reads, in one-letter code: Protein PPP4R3C1 (813 aa).

The disordered stretch occupies residues 730–813 (NESESAIEGQ…PPPKRPNLST (84 aa)). Residues 777–788 (YDTDDENDDDPY) are compositionally biased toward acidic residues.

The protein belongs to the SMEK family.

The polypeptide is Protein PPP4R3C1 (Mus musculus (Mouse)).